Consider the following 556-residue polypeptide: CDP-diacylglycerol--glycerol-3-phosphate 3-phosphatidyltransferase, mitochondrial (556 aa).

The transit peptide at 1–28 directs the protein to the mitochondrion; it reads MAVAAAAAAGPVFWRRLLGLLPGRPGLA. A Phosphoserine modification is found at Ser-49. ATP is bound at residue 124–131; that stretch reads ASLYLGTG. PLD phosphodiesterase domains lie at 215–241 and 460–493; these read TIGL…SDSY and RGWT…GYRS. Catalysis depends on residues His-220, Lys-222, and Asp-227.

The protein belongs to the CDP-alcohol phosphatidyltransferase class-II family.

Its subcellular location is the mitochondrion. It carries out the reaction a CDP-1,2-diacyl-sn-glycerol + sn-glycerol 3-phosphate = a 1,2-diacyl-sn-glycero-3-phospho-(1'-sn-glycero-3'-phosphate) + CMP + H(+). The protein operates within phospholipid metabolism; phosphatidylglycerol biosynthesis; phosphatidylglycerol from CDP-diacylglycerol: step 1/2. Activated by calcium and magnesium and inhibited by other bivalent cations. Functionally, functions in the biosynthesis of the anionic phospholipids phosphatidylglycerol and cardiolipin. In Pongo abelii (Sumatran orangutan), this protein is CDP-diacylglycerol--glycerol-3-phosphate 3-phosphatidyltransferase, mitochondrial (PGS1).